Reading from the N-terminus, the 86-residue chain is Ferredoxin YfhL (86 aa).

4Fe-4S ferredoxin-type domains follow at residues 1–29 and 31–65; these read MALL…MGDH and YEIN…KDPA. [4Fe-4S] cluster-binding residues include Cys-9, Cys-12, Cys-15, Cys-19, Cys-38, Cys-41, Cys-50, and Cys-54.

[4Fe-4S] cluster is required as a cofactor.

Ferredoxins are iron-sulfur proteins that transfer electrons in a wide variety of metabolic reactions. This Escherichia coli (strain K12) protein is Ferredoxin YfhL (yfhL).